A 504-amino-acid polypeptide reads, in one-letter code: MDKNKIIIFDTTLRDGEQSPGASMNTAEKLQIALQLERLGVDVMEAGFAAASPGDFDAVNQIAKQASNITVCSLARAVERDIKAAGEALAPAKNKRIHTFIATSPIHMQYKLKMSPDEVIRCAVEAVQYSKTFCDDVEFSCEDACRSEMSFLKEICEAAINAGAKTINIPDTVGYLYPEEITARISEIVKFIGDRAVVSVHNHNDLGMATANSLAAIKAGARQVEGTINGIGERAGNAALEEIVMAIKTRQDVFAPLYTGIISKEIYPTSRLIASITGIEPQPNKAIVGKNAFAHESGIHQDGVLKHKETYEIISAESIGLEKNSLVLGKHSGRHAFKDKLASLGFDLDSDALNKAFEKFKDLADKKKEIFDDDIRALVAEEITKIPQAYEITDLLQSSGGSLASASMSIRHNDEIVSDSALGNGTADAIFKVVDRISGINGTLKDYKVTAVSQGKDALAKVDVKVEFEGKTAVMGHGLDIDTMMASAKAYVGALNSYLRIHKN.

A Pyruvate carboxyltransferase domain is found at 6–267 (IIIFDTTLRD…YTGIISKEIY (262 aa)). Mn(2+)-binding residues include D15, H201, H203, and N237. The tract at residues 391–504 (EITDLLQSSG…LNSYLRIHKN (114 aa)) is regulatory domain.

This sequence belongs to the alpha-IPM synthase/homocitrate synthase family. LeuA type 1 subfamily. In terms of assembly, homodimer. It depends on Mn(2+) as a cofactor.

It is found in the cytoplasm. The catalysed reaction is 3-methyl-2-oxobutanoate + acetyl-CoA + H2O = (2S)-2-isopropylmalate + CoA + H(+). Its pathway is amino-acid biosynthesis; L-leucine biosynthesis; L-leucine from 3-methyl-2-oxobutanoate: step 1/4. Its function is as follows. Catalyzes the condensation of the acetyl group of acetyl-CoA with 3-methyl-2-oxobutanoate (2-ketoisovalerate) to form 3-carboxy-3-hydroxy-4-methylpentanoate (2-isopropylmalate). The sequence is that of 2-isopropylmalate synthase from Campylobacter concisus (strain 13826).